A 442-amino-acid polypeptide reads, in one-letter code: 6-phospho-alpha-glucosidase 1 (442 aa).

6–72 contacts NAD(+); that stretch reads FSVLIAGGGS…PEVEFLATTD (67 aa). Residues R95 and N149 each coordinate substrate. Mn(2+) is bound at residue C171. Residue D172 is the Proton donor of the active site. H202 is a Mn(2+) binding site. The active-site Proton acceptor is Y265. Residue R285 coordinates substrate.

It belongs to the glycosyl hydrolase 4 family. Homodimer. May also form homotetramer. The cofactor is Mn(2+). Requires Co(2+) as cofactor. It depends on Ni(2+) as a cofactor. Fe(2+) serves as cofactor. Mg(2+) is required as a cofactor. The cofactor is NAD(+).

It carries out the reaction alpha-maltose 6'-phosphate + H2O = D-glucose 6-phosphate + D-glucose. Is inhibited by EDTA in vitro. Its function is as follows. Is probably involved in the catabolism of alpha-glycosides accumulated via a phosphoenolpyruvate-dependent phosphotransferase system (PEP-PTS). Hydrolyzes a wide variety of 6-phospho-alpha-D-glucosides including the five isomeric derivatives of sucrose, i.e. trehalulose-6'-phosphate, turanose-6'-phosphate, maltulose-6'-phosphate, leucrose-6'-phosphate, and palatinose-6'-phosphate, but is not active on sucrose-6-phosphate. Can also hydrolyze maltose-6'-phosphate and methyl-alpha-glucose-6-phosphate, and poorly, trehalose-6-phosphate. Fails to hydrolyze beta-O-linked phosphorylated disaccharides such as cellobiose-6'-phosphate and gentiobiose-6'-phosphate. Does not seem to be involved in maltose catabolism. The protein is 6-phospho-alpha-glucosidase 1 (simA) of Lacticaseibacillus paracasei (strain ATCC 334 / BCRC 17002 / CCUG 31169 / CIP 107868 / KCTC 3260 / NRRL B-441) (Lactobacillus paracasei).